Reading from the N-terminus, the 400-residue chain is tRNA (guanine-N(7)-)-methyltransferase (400 aa).

Positions 124, 149, and 176 each coordinate S-adenosyl-L-methionine. Aspartate 232 is a substrate binding site.

It belongs to the class I-like SAM-binding methyltransferase superfamily. TrmB family.

It carries out the reaction guanosine(46) in tRNA + S-adenosyl-L-methionine = N(7)-methylguanosine(46) in tRNA + S-adenosyl-L-homocysteine. It participates in tRNA modification; N(7)-methylguanine-tRNA biosynthesis. Catalyzes the formation of N(7)-methylguanine at position 46 (m7G46) in tRNA. The chain is tRNA (guanine-N(7)-)-methyltransferase from Helicobacter pylori (strain J99 / ATCC 700824) (Campylobacter pylori J99).